A 231-amino-acid chain; its full sequence is Sec-independent protein translocase protein TatB (231 aa).

The chain crosses the membrane as a helical span at residues 1–21; sequence MFDIGFSELLLFGVIALIVLG. Residues 77-168 are disordered; sequence MRREMAEMRG…SLKTDFNDNA (92 aa). Residues 101-111 are compositionally biased toward basic and acidic residues; sequence ASRDLVDDAKP. Residues 148–157 show a composition bias toward polar residues; sequence SEQPSAQGDN.

It belongs to the TatB family. In terms of assembly, the Tat system comprises two distinct complexes: a TatABC complex, containing multiple copies of TatA, TatB and TatC subunits, and a separate TatA complex, containing only TatA subunits. Substrates initially bind to the TatABC complex, which probably triggers association of the separate TatA complex to form the active translocon.

It localises to the cell inner membrane. Functionally, part of the twin-arginine translocation (Tat) system that transports large folded proteins containing a characteristic twin-arginine motif in their signal peptide across membranes. Together with TatC, TatB is part of a receptor directly interacting with Tat signal peptides. TatB may form an oligomeric binding site that transiently accommodates folded Tat precursor proteins before their translocation. The protein is Sec-independent protein translocase protein TatB of Psychrobacter cryohalolentis (strain ATCC BAA-1226 / DSM 17306 / VKM B-2378 / K5).